Reading from the N-terminus, the 545-residue chain is Triacylglycerol lipase ptl1 (545 aa).

The PNPLA domain occupies 182–358 (LYFNGGTAFG…EVCTPKNFIW (177 aa)). The short motif at 213–217 (GCASG) is the GXSXG element.

It localises to the lipid droplet. The enzyme catalyses a triacylglycerol + H2O = a diacylglycerol + a fatty acid + H(+). In terms of biological role, lipid particle-localized triacylglycerol (TAG) lipase. The lipid droplet/particle is a lipid storage compartment which serves as a depot of energy and building blocks for membrane lipid biosynthesis. Involved in the mobilization of the non-polar storage lipids triacylglycerols (TAGs) from lipid particles by hydrolysis of TAGs, releasing and supplying specific fatty acids to the appropriate metabolic pathways. The polypeptide is Triacylglycerol lipase ptl1 (ptl1) (Schizosaccharomyces pombe (strain 972 / ATCC 24843) (Fission yeast)).